The primary structure comprises 372 residues: Glutamate 5-kinase (372 aa).

K6 lines the ATP pocket. Substrate-binding residues include S46, D133, and N145. ATP contacts are provided by residues 165–166 (TD) and 207–213 (TGGMYTK). A PUA domain is found at 272–350 (NGFLFVDEGA…HDIESILGYK (79 aa)).

It belongs to the glutamate 5-kinase family.

The protein localises to the cytoplasm. It carries out the reaction L-glutamate + ATP = L-glutamyl 5-phosphate + ADP. It participates in amino-acid biosynthesis; L-proline biosynthesis; L-glutamate 5-semialdehyde from L-glutamate: step 1/2. In terms of biological role, catalyzes the transfer of a phosphate group to glutamate to form L-glutamate 5-phosphate. This chain is Glutamate 5-kinase, found in Caldanaerobacter subterraneus subsp. tengcongensis (strain DSM 15242 / JCM 11007 / NBRC 100824 / MB4) (Thermoanaerobacter tengcongensis).